The primary structure comprises 203 residues: Ras-related protein Rab-8B (203 aa).

GTP is bound by residues 22-29 (GDSGVGKS), 70-74 (DTAGQ), and 128-131 (NKCD). 2 S-geranylgeranyl cysteine lipidation sites follow: C202 and C203.

This sequence belongs to the small GTPase superfamily. Rab family.

Its subcellular location is the cell membrane. Its function is as follows. Protein transport. Probably involved in vesicular traffic. In Dictyostelium discoideum (Social amoeba), this protein is Ras-related protein Rab-8B (rab8B).